Consider the following 366-residue polypeptide: MTPSMLPTEHYDDQLSEKIHRLEQMMQPFGAPAVQPFRSPVSHYRMRAEFRIWHDGDDLYHIMFDPQSKQRIRVDQFPAASELINRLMPLLLDALRPNPTLRHKLFQIDYLSTRSGQIIVSLLYHRTLDDAWKQAAEALRDALRGQGFAIQLIGRASKTKICLDQDWVDEVLPVAGRQMIYRQVENSFTQPNAAINIQMLEWALDATRGAEGDLLELYCGNGNFSLALAHNFRQVLATEIAKPSVAAAQYNIAANQINNVQIIRMSAEEFTQAMQGVRAFNRLQGIDLHSYECNTIFVDPPRSGLDTETLGMVQGYPNILYISCNPLTLCDNLHTLNQSHRITRLALFDQFPYTHHMECGVLLERR.

Residues glutamine 190, tyrosine 218, asparagine 223, glutamate 239, and aspartate 299 each contribute to the S-adenosyl-L-methionine site. Catalysis depends on cysteine 324, which acts as the Nucleophile. Residue glutamate 358 is the Proton acceptor of the active site.

The protein belongs to the class I-like SAM-binding methyltransferase superfamily. RNA M5U methyltransferase family. TrmA subfamily.

It carries out the reaction uridine(54) in tRNA + S-adenosyl-L-methionine = 5-methyluridine(54) in tRNA + S-adenosyl-L-homocysteine + H(+). The catalysed reaction is uridine(341) in tmRNA + S-adenosyl-L-methionine = 5-methyluridine(341) in tmRNA + S-adenosyl-L-homocysteine + H(+). In terms of biological role, dual-specificity methyltransferase that catalyzes the formation of 5-methyluridine at position 54 (m5U54) in all tRNAs, and that of position 341 (m5U341) in tmRNA (transfer-mRNA). In Edwardsiella ictaluri (strain 93-146), this protein is tRNA/tmRNA (uracil-C(5))-methyltransferase.